Reading from the N-terminus, the 358-residue chain is Carbamoyl phosphate synthase small chain (358 aa).

The tract at residues 1–168 (MKRLLLLEDG…TKLAYASPGV (168 aa)) is CPSase. L-glutamine-binding residues include Ser45, Gly219, and Gly221. The Glutamine amidotransferase type-1 domain maps to 171–357 (NIVLVDFGLK…INMIDDFQQK (187 aa)). The Nucleophile role is filled by Cys246. L-glutamine-binding residues include Met247, Gln250, Asn288, Gly290, and Tyr291. Active-site residues include His330 and Asp332.

This sequence belongs to the CarA family. Composed of two chains; the small (or glutamine) chain promotes the hydrolysis of glutamine to ammonia, which is used by the large (or ammonia) chain to synthesize carbamoyl phosphate. Tetramer of heterodimers (alpha,beta)4.

The catalysed reaction is hydrogencarbonate + L-glutamine + 2 ATP + H2O = carbamoyl phosphate + L-glutamate + 2 ADP + phosphate + 2 H(+). It catalyses the reaction L-glutamine + H2O = L-glutamate + NH4(+). Its pathway is amino-acid biosynthesis; L-arginine biosynthesis; carbamoyl phosphate from bicarbonate: step 1/1. It participates in pyrimidine metabolism; UMP biosynthesis via de novo pathway; (S)-dihydroorotate from bicarbonate: step 1/3. Functionally, small subunit of the glutamine-dependent carbamoyl phosphate synthetase (CPSase). CPSase catalyzes the formation of carbamoyl phosphate from the ammonia moiety of glutamine, carbonate, and phosphate donated by ATP, constituting the first step of 2 biosynthetic pathways, one leading to arginine and/or urea and the other to pyrimidine nucleotides. The small subunit (glutamine amidotransferase) binds and cleaves glutamine to supply the large subunit with the substrate ammonia. The chain is Carbamoyl phosphate synthase small chain from Streptococcus agalactiae serotype III (strain NEM316).